The sequence spans 397 residues: Phosphoglycerate kinase (397 aa).

Substrate is bound by residues 21–23, Arg-36, 59–62, Arg-118, and Arg-151; these read DFN and HCGR. ATP-binding positions include Lys-201, Glu-323, and 353-356; that span reads GGDT.

Belongs to the phosphoglycerate kinase family. Monomer.

The protein localises to the cytoplasm. It catalyses the reaction (2R)-3-phosphoglycerate + ATP = (2R)-3-phospho-glyceroyl phosphate + ADP. Its pathway is carbohydrate degradation; glycolysis; pyruvate from D-glyceraldehyde 3-phosphate: step 2/5. This Bartonella henselae (strain ATCC 49882 / DSM 28221 / CCUG 30454 / Houston 1) (Rochalimaea henselae) protein is Phosphoglycerate kinase.